We begin with the raw amino-acid sequence, 278 residues long: Bicarbonate transport ATP-binding protein CmpD (278 aa).

The 234-residue stretch at 21 to 254 (LIVENVSKIY…RPRDRERIME (234 aa)) folds into the ABC transporter domain. 57–64 (GHSGCGKS) contributes to the ATP binding site.

Belongs to the ABC transporter superfamily. Nitrate/nitrite/cyanate uptake transporter (NitT) (TC 3.A.1.16) family. The complex is composed of two ATP-binding proteins (CmpC and CmpD), a transmembrane protein (CmpB) and a solute-binding protein (CmpA).

The protein resides in the cell inner membrane. Functionally, part of the ABC transporter complex CmpABCD involved in bicarbonate transport. Responsible for energy coupling to the transport system. This Synechococcus elongatus (strain ATCC 33912 / PCC 7942 / FACHB-805) (Anacystis nidulans R2) protein is Bicarbonate transport ATP-binding protein CmpD (cmpD).